Consider the following 682-residue polypeptide: Homeobox-leucine zipper protein HDG7 (682 aa).

The segment at 33 to 65 (LSDDSFDAMSGDEDKQEQRPKKKKRKTKYHRHT) is disordered. The segment covering 52–65 (PKKKKRKTKYHRHT) has biased composition (basic residues). A DNA-binding region (homeobox) is located at residues 57 to 116 (RKTKYHRHTSYQIQELESFFKECPHPNEKQRLELGKKLTLESKQIKFWFQNRRTQMKTQL). The stretch at 105–186 (FQNRRTQMKT…LDRICALANR (82 aa)) forms a coiled coil. The 216-residue stretch at 214 to 429 (SGGTSLMFMD…LQRQCESFTM (216 aa)) folds into the START domain.

Belongs to the HD-ZIP homeobox family. Class IV subfamily. Interacts with AIL7/PLT7. In terms of tissue distribution, expressed in cells around the base of leaf primordia, in the outermost 2 to 3 cell layers along the boundary between two leaf primordia. Expressed in lateral root primordia and tips, and in the epidermal boundaries of two cotyledons at heart-stage embryo.

The protein resides in the nucleus. Its function is as follows. Probable transcription factor that binds to the DNA sequence 5'-GCATTAAATGC-3'. Seems to promote cell differentiation. This Arabidopsis thaliana (Mouse-ear cress) protein is Homeobox-leucine zipper protein HDG7.